A 754-amino-acid chain; its full sequence is ATP-dependent RNA helicase DRS1 (754 aa).

2 disordered regions span residues 1 to 61 and 119 to 227; these read MVVG…NLDE and GLVK…GDEA. Residues 19 to 34 are compositionally biased toward acidic residues; it reads DSEDDVPILDSSDDEK. A compositionally biased stretch (basic residues) spans 40-51; that stretch reads TTKKRKGKNNKK. Residues 124–142 are compositionally biased toward basic and acidic residues; that stretch reads AHIDSKQEEETEKEKVEKE. 2 stretches are compositionally biased toward acidic residues: residues 167–193 and 202–211; these read NQSEEEEEEEEEEEEEEEEEEEEQEEM and DEIDEEDDSE. A Phosphoserine modification is found at serine 210. Positions 233–261 match the Q motif motif; the sequence is ENFNSLSLSRPVLKGLASLGYVKPSPIQS. Residues 264-439 enclose the Helicase ATP-binding domain; that stretch reads IPIALLGKDI…SLSLKKPVRI (176 aa). Residue 277–284 coordinates ATP; that stretch reads AVTGSGKT. The DEAD box signature appears at 387-390; sequence DEAD. In terms of domain architecture, Helicase C-terminal spans 450–641; sequence KLTQEFVRIR…SMNDTIEDIL (192 aa). The stretch at 623–669 forms a coiled coil; that stretch reads IEETNKLVESMNDTIEDILVEEKEEKEILRAEMQLRKGENMLKHKKE. The disordered stretch occupies residues 675–754; it reads RRTWFQSESD…NKKKGFKSRR (80 aa). A compositionally biased stretch (basic residues) spans 696–707; it reads RNKKVTNSKKRK. Residues 724-736 show a composition bias toward basic and acidic residues; that stretch reads TKTDRIADQERTF. Basic residues predominate over residues 737 to 754; it reads KKQKSTNSNKKKGFKSRR.

The protein belongs to the DEAD box helicase family. DDX27/DRS1 subfamily. Interacts with RRP1 and associates with pre-ribosomal particles.

It is found in the nucleus. The protein resides in the nucleolus. The catalysed reaction is ATP + H2O = ADP + phosphate + H(+). Functionally, ATP-binding RNA helicase involved in ribosome assembly. In Saccharomyces cerevisiae (strain YJM789) (Baker's yeast), this protein is ATP-dependent RNA helicase DRS1 (DRS1).